The sequence spans 815 residues: Echinoderm microtubule-associated protein-like 1 (815 aa).

Residues 31 to 72 (SMEVTDRIASLEQRVQMQEDDIQLLKSALADVVRRLNITEEQ) are a coiled coil. The tract at residues 77–179 (NRKGPTKARP…NSESKPKEPV (103 aa)) is disordered. Positions 92 to 101 (PLRTTVNNGT) are enriched in polar residues. S113 carries the post-translational modification Phosphoserine. Positions 126–138 (TKSNIKRTSSSER) are enriched in polar residues. A compositionally biased stretch (basic and acidic residues) spans 143–153 (GRRESNGDSRG). Residues 156–168 (NRTGSTSSSSSGK) show a composition bias toward low complexity. The tandem atypical propeller in EMLs stretch occupies residues 176–815 (KEPVFSAEEG…DTSIMQWRVI (640 aa)). 12 WD repeats span residues 261–310 (EQLQ…IWDS), 315–358 (TLHV…VWDW), 363–400 (KLAD…FWTL), 409–446 (QGLF…VWGK), 450–489 (RISY…SWSG), 493–530 (KLRK…LQGT), 535–572 (FTPI…LWDA), 578–613 (VWDK…VFDT), 617–655 (DLVT…IYGV), 664–701 (RVGK…YWVP), 709–768 (SVET…LFSY), and 775–814 (APSH…QWRV).

Belongs to the WD repeat EMAP family. Homotrimer; self-association is mediated by the N-terminal coiled coil. Does not interact with EML3. Binds repolymerizing microtubules. Binds unpolymerized tubulins via its WD repeat region. Interacts with TASOR. In terms of tissue distribution, ubiquitous; expressed in most tissues with the exception of thymus and peripheral blood lymphocytes.

It is found in the cytoplasm. The protein resides in the perinuclear region. The protein localises to the cytoskeleton. In terms of biological role, modulates the assembly and organization of the microtubule cytoskeleton, and probably plays a role in regulating the orientation of the mitotic spindle and the orientation of the plane of cell division. Required for normal proliferation of neuronal progenitor cells in the developing brain and for normal brain development. Does not affect neuron migration per se. The polypeptide is Echinoderm microtubule-associated protein-like 1 (EML1) (Homo sapiens (Human)).